Consider the following 315-residue polypeptide: Calumenin (315 aa).

An N-terminal signal peptide occupies residues 1–19; the sequence is MNKRPLLLCLGLWVACTLS. 6 EF-hand domains span residues 68 to 103, 104 to 139, 151 to 186, 188 to 223, 229 to 264, and 265 to 300; these read ESKE…AQKK, YVYD…TYLD, QMMI…EEFD, MKDI…HDGD, WVKT…SDYD, and HSEA…FVGS. The Ca(2+) site is built by Asp81, Asp83, Asp85, Tyr87, Glu92, Asp117, Ser119, Asp121, and Glu128. N-linked (GlcNAc...) asparagine glycosylation occurs at Asn131. Ca(2+) contacts are provided by Asp164, Asp166, Asp168, Glu175, Asp201, Asn203, Asp205, Glu212, Asp242, Asn244, Asp246, Lys248, Glu253, Asp278, Asn280, Asp282, Lys284, and Glu289. The Prevents secretion from ER signature appears at 312-315; the sequence is HDEF.

This sequence belongs to the CREC family. In terms of assembly, interacts with ggcx.

The protein resides in the endoplasmic reticulum membrane. Its subcellular location is the golgi apparatus. It localises to the secreted. The protein localises to the melanosome. It is found in the sarcoplasmic reticulum lumen. Its function is as follows. Involved in regulation of vitamin K-dependent carboxylation of multiple N-terminal glutamate residues. Seems to inhibit gamma-carboxylase ggcx. Binds 7 calcium ions with a low affinity. The sequence is that of Calumenin (calu) from Xenopus laevis (African clawed frog).